The following is a 511-amino-acid chain: Glucan endo-1,3-beta-glucosidase 1 (511 aa).

Positions Met1 to Ser28 are cleaved as a signal peptide. Residue Asn109 is glycosylated (N-linked (GlcNAc...) asparagine). Catalysis depends on Glu137, which acts as the Proton donor. N-linked (GlcNAc...) asparagine glycans are attached at residues Asn192 and Asn274. Catalysis depends on Glu284, which acts as the Nucleophile. Asn374, Asn378, Asn407, Asn473, and Asn480 each carry an N-linked (GlcNAc...) asparagine glycan. Cys382 and Cys445 are oxidised to a cystine. Ala485 is lipidated: GPI-anchor amidated alanine. The propeptide at Ala486 to Leu511 is removed in mature form.

The protein belongs to the glycosyl hydrolase 17 family. Post-translationally, contains two additional disulfide bonds.

It is found in the cell membrane. It catalyses the reaction Hydrolysis of (1-&gt;3)-beta-D-glucosidic linkages in (1-&gt;3)-beta-D-glucans.. This chain is Glucan endo-1,3-beta-glucosidase 1, found in Arabidopsis thaliana (Mouse-ear cress).